A 426-amino-acid polypeptide reads, in one-letter code: 2-(3-amino-3-carboxypropyl)histidine synthase subunit 1 (426 aa).

Cysteine 133, cysteine 239, and cysteine 368 together coordinate [4Fe-4S] cluster.

This sequence belongs to the DPH1/DPH2 family. DPH1 subfamily. As to quaternary structure, component of the 2-(3-amino-3-carboxypropyl)histidine synthase complex composed of DPH1, DPH2, DPH3 and a NADH-dependent reductase, predominantly CBR1. [4Fe-4S] cluster is required as a cofactor.

The protein localises to the cytoplasm. It catalyses the reaction L-histidyl-[translation elongation factor 2] + S-adenosyl-L-methionine = 2-[(3S)-amino-3-carboxypropyl]-L-histidyl-[translation elongation factor 2] + S-methyl-5'-thioadenosine + H(+). It functions in the pathway protein modification; peptidyl-diphthamide biosynthesis. Catalyzes the first step of diphthamide biosynthesis, a post-translational modification of histidine which occurs in elongation factor 2. DPH1 and DPH2 transfer a 3-amino-3-carboxypropyl (ACP) group from S-adenosyl-L-methionine (SAM) to a histidine residue, the reaction is assisted by a reduction system comprising DPH3 and a NADH-dependent reductase, predominantly CBR1. The polypeptide is 2-(3-amino-3-carboxypropyl)histidine synthase subunit 1 (DPH1) (Eremothecium gossypii (strain ATCC 10895 / CBS 109.51 / FGSC 9923 / NRRL Y-1056) (Yeast)).